The sequence spans 195 residues: MDLTLIIDNYDSFVYNIAQIVGELGSYPIVIRNDEISIKGIERIDPDRIIISPGPGTPEKREDIGVSLDVIKYLGKRTPILGVCLGHQAIGYAFGAKIRRARKVFHGKISNIILVNNSPLSLYYGIAKEFKATRYHSLVVDEVHRPLIVDAISAEDNEIMAIHHEEYPIYGVQFHPESVGTSLGYKILYNFLNRV.

The Glutamine amidotransferase type-1 domain occupies 3-195 (LTLIIDNYDS…KILYNFLNRV (193 aa)). 54-56 (GPG) is a binding site for L-glutamine. Catalysis depends on cysteine 84, which acts as the Nucleophile; for GATase activity. L-glutamine-binding positions include glutamine 88 and 137–138 (SL). Active-site for GATase activity residues include histidine 175 and glutamate 177.

As to quaternary structure, heterotetramer consisting of two non-identical subunits: a beta subunit (TrpG) and a large alpha subunit (TrpE).

The enzyme catalyses chorismate + L-glutamine = anthranilate + pyruvate + L-glutamate + H(+). It functions in the pathway amino-acid biosynthesis; L-tryptophan biosynthesis; L-tryptophan from chorismate: step 1/5. In terms of biological role, part of a heterotetrameric complex that catalyzes the two-step biosynthesis of anthranilate, an intermediate in the biosynthesis of L-tryptophan. In the first step, the glutamine-binding beta subunit (TrpG) of anthranilate synthase (AS) provides the glutamine amidotransferase activity which generates ammonia as a substrate that, along with chorismate, is used in the second step, catalyzed by the large alpha subunit of AS (TrpE) to produce anthranilate. In the absence of TrpG, TrpE can synthesize anthranilate directly from chorismate and high concentrations of ammonia. The sequence is that of Anthranilate synthase component 2 (trpG) from Saccharolobus solfataricus (strain ATCC 35092 / DSM 1617 / JCM 11322 / P2) (Sulfolobus solfataricus).